Consider the following 251-residue polypeptide: Ditrans,polycis-undecaprenyl-diphosphate synthase ((2E,6E)-farnesyl-diphosphate specific) (251 aa).

Residue Asp20 is part of the active site. Asp20 lines the Mg(2+) pocket. Substrate-binding positions include 21–24 (GNGR), Trp25, Arg33, His37, and 65–67 (SSE). Catalysis depends on Asn68, which acts as the Proton acceptor. Substrate is bound by residues Trp69, Arg71, Arg188, and 194 to 196 (RIS). Glu207 is a binding site for Mg(2+).

The protein belongs to the UPP synthase family. In terms of assembly, homodimer. Mg(2+) is required as a cofactor.

It catalyses the reaction 8 isopentenyl diphosphate + (2E,6E)-farnesyl diphosphate = di-trans,octa-cis-undecaprenyl diphosphate + 8 diphosphate. Its function is as follows. Catalyzes the sequential condensation of isopentenyl diphosphate (IPP) with (2E,6E)-farnesyl diphosphate (E,E-FPP) to yield (2Z,6Z,10Z,14Z,18Z,22Z,26Z,30Z,34E,38E)-undecaprenyl diphosphate (di-trans,octa-cis-UPP). UPP is the precursor of glycosyl carrier lipid in the biosynthesis of bacterial cell wall polysaccharide components such as peptidoglycan and lipopolysaccharide. The protein is Ditrans,polycis-undecaprenyl-diphosphate synthase ((2E,6E)-farnesyl-diphosphate specific) of Vibrio vulnificus (strain CMCP6).